A 258-amino-acid polypeptide reads, in one-letter code: Phosphate import ATP-binding protein PstB (258 aa).

In terms of domain architecture, ABC transporter spans 12–253 (IEVKNLNFYY…PARKETEDYI (242 aa)). 44-51 (GPSGCGKS) provides a ligand contact to ATP.

Belongs to the ABC transporter superfamily. Phosphate importer (TC 3.A.1.7) family. In terms of assembly, the complex is composed of two ATP-binding proteins (PstB), two transmembrane proteins (PstC and PstA) and a solute-binding protein (PstS).

Its subcellular location is the cell inner membrane. The catalysed reaction is phosphate(out) + ATP + H2O = ADP + 2 phosphate(in) + H(+). Part of the ABC transporter complex PstSACB involved in phosphate import. Responsible for energy coupling to the transport system. The sequence is that of Phosphate import ATP-binding protein PstB from Bordetella avium (strain 197N).